The primary structure comprises 465 residues: Innexin-11 (465 aa).

Helical transmembrane passes span 29–49, 105–125, 195–215, and 286–306; these read LMTPNILLAFSVLISFKQFGG, QWVPFFLLLQAAFFRAPSYLW, SGFISWIYLFTKVLYFLNVFA, and IFVLLWFWYVILLLSSTVSLV. The interval 433 to 465 is disordered; the sequence is ISTSLMPDKDDIESSSTSSEEDQKRVSNVITNI.

Belongs to the pannexin family.

It localises to the cell membrane. Its subcellular location is the cell junction. The protein localises to the gap junction. Functionally, structural component of the gap junctions. The polypeptide is Innexin-11 (inx-11) (Caenorhabditis elegans).